Consider the following 278-residue polypeptide: 4-hydroxy-3-methylbut-2-enyl diphosphate reductase (278 aa).

C12 is a binding site for [4Fe-4S] cluster. H41 and H74 together coordinate (2E)-4-hydroxy-3-methylbut-2-enyl diphosphate. 2 residues coordinate dimethylallyl diphosphate: H41 and H74. H41 and H74 together coordinate isopentenyl diphosphate. Position 96 (C96) interacts with [4Fe-4S] cluster. H124 is a binding site for (2E)-4-hydroxy-3-methylbut-2-enyl diphosphate. H124 contributes to the dimethylallyl diphosphate binding site. H124 provides a ligand contact to isopentenyl diphosphate. E126 (proton donor) is an active-site residue. T161 contributes to the (2E)-4-hydroxy-3-methylbut-2-enyl diphosphate binding site. A [4Fe-4S] cluster-binding site is contributed by C189. Positions 217, 219, and 261 each coordinate (2E)-4-hydroxy-3-methylbut-2-enyl diphosphate. The dimethylallyl diphosphate site is built by S217, N219, and S261. Isopentenyl diphosphate-binding residues include S217, N219, and S261.

It belongs to the IspH family. The cofactor is [4Fe-4S] cluster.

The enzyme catalyses isopentenyl diphosphate + 2 oxidized [2Fe-2S]-[ferredoxin] + H2O = (2E)-4-hydroxy-3-methylbut-2-enyl diphosphate + 2 reduced [2Fe-2S]-[ferredoxin] + 2 H(+). It carries out the reaction dimethylallyl diphosphate + 2 oxidized [2Fe-2S]-[ferredoxin] + H2O = (2E)-4-hydroxy-3-methylbut-2-enyl diphosphate + 2 reduced [2Fe-2S]-[ferredoxin] + 2 H(+). Its pathway is isoprenoid biosynthesis; dimethylallyl diphosphate biosynthesis; dimethylallyl diphosphate from (2E)-4-hydroxy-3-methylbutenyl diphosphate: step 1/1. It participates in isoprenoid biosynthesis; isopentenyl diphosphate biosynthesis via DXP pathway; isopentenyl diphosphate from 1-deoxy-D-xylulose 5-phosphate: step 6/6. Functionally, catalyzes the conversion of 1-hydroxy-2-methyl-2-(E)-butenyl 4-diphosphate (HMBPP) into a mixture of isopentenyl diphosphate (IPP) and dimethylallyl diphosphate (DMAPP). Acts in the terminal step of the DOXP/MEP pathway for isoprenoid precursor biosynthesis. This chain is 4-hydroxy-3-methylbut-2-enyl diphosphate reductase, found in Anaeromyxobacter sp. (strain K).